The following is a 286-amino-acid chain: Serine carboxypeptidase-like (286 aa).

Residue S4 is part of the active site. 2 cysteine pairs are disulfide-bonded: C83-C98 and C121-C126. D193 is a catalytic residue. Residue C196 participates in substrate binding. N227 carries an N-linked (GlcNAc...) asparagine glycan. The active site involves H250.

This sequence belongs to the peptidase S10 family.

Its function is as follows. Involved in degradation of small peptides. The polypeptide is Serine carboxypeptidase-like (Pisum sativum (Garden pea)).